Reading from the N-terminus, the 631-residue chain is Probable sulfate transporter 3.3 (631 aa).

Residues 1 to 69 are Cytoplasmic-facing; the sequence is MEVHKVVAPP…EYSFSLLKSD (69 aa). Residues 70-90 form a helical membrane-spanning segment; the sequence is VVSGLTIASLAIPQGISYAKL. Residues 91-92 lie on the Extracellular side of the membrane; it reads AN. A helical transmembrane segment spans residues 93–113; that stretch reads LPPIVGLYSSFVPPLVYAVLG. Topologically, residues 114-117 are cytoplasmic; it reads SSRD. A helical membrane pass occupies residues 118 to 138; sequence LAVGPVSIASLILGSMLRQQV. Residues 139–144 lie on the Extracellular side of the membrane; it reads SPVDDP. The helical transmembrane segment at 145 to 165 threads the bilayer; that stretch reads VLFLQLAFSSTFFAGLFQASL. Topologically, residues 166–171 are cytoplasmic; the sequence is GILRLG. Residues 172–192 traverse the membrane as a helical segment; that stretch reads FIIDFLSKATLIGFMGGAAII. Over 193 to 223 the chain is Extracellular; the sequence is VSLQQLKGLLGITHFTKHMSVVPVLSSVFQH. The helical transmembrane segment at 224–244 threads the bilayer; sequence TNEWSWQTIVMGVCFLLFLLS. The Cytoplasmic segment spans residues 245–256; the sequence is TRHLSMKKPKLF. The helical transmembrane segment at 257 to 277 threads the bilayer; sequence WVSAGAPLLSVIVSTLLVFVF. At 278-309 the chain is on the extracellular side; that stretch reads RAERHGISVIGKLPEGLNPPSWNMLQFHGSHL. A helical transmembrane segment spans residues 310-330; it reads ALVAKTGLVTGIVSLTEGIAV. The Cytoplasmic segment spans residues 331–347; sequence GRTFAALKNYHVDGNKE. Residues 348–368 traverse the membrane as a helical segment; sequence MIAIGLMNVVGSATSCYVTTG. Over 369 to 384 the chain is Extracellular; the sequence is AFSRSAVNNNAGAKTA. Residues 385–405 form a helical membrane-spanning segment; it reads VSNIVMSVTVMVTLLFLMPLF. Topologically, residues 406-410 are cytoplasmic; sequence EYTPN. The chain crosses the membrane as a helical span at residues 411–431; that stretch reads VVLGAIIVTAVIGLIDLPAAC. Topologically, residues 432-441 are extracellular; it reads HIWKIDKFDF. The chain crosses the membrane as a helical span at residues 442–462; that stretch reads LVMLCAFFGVIFLSVQNGLAI. The Cytoplasmic segment spans residues 463-631; it reads AVGLSLFKIL…SLKGPSLSNV (169 aa). Positions 497–621 constitute an STAS domain; sequence HYKEAQRIPG…LTVAEAVASL (125 aa).

Belongs to the SLC26A/SulP transporter (TC 2.A.53) family. As to expression, expressed only in leaves.

Its subcellular location is the membrane. Its function is as follows. H(+)/sulfate cotransporter that may play a role in the regulation of sulfate assimilation. In Arabidopsis thaliana (Mouse-ear cress), this protein is Probable sulfate transporter 3.3 (SULTR3;3).